Here is a 1124-residue protein sequence, read N- to C-terminus: EGF and laminin G domain-containing protein (1124 aa).

Over 1–1055 the chain is Extracellular; it reads RTFVKKYSAS…KLQAEDDDKT (1055 aa). 2 consecutive Laminin G-like domains span residues 8–203 and 210–369; these read SASR…NQKC and PFTF…WSGC. Cystine bridges form between Cys-167-Cys-203, Cys-342-Cys-369, Cys-375-Cys-386, Cys-380-Cys-395, Cys-397-Cys-412, Cys-761-Cys-788, Cys-792-Cys-803, Cys-797-Cys-812, and Cys-814-Cys-824. The EGF-like 1 domain maps to 371–413; sequence ITDFCIFSPCLHGGECTQTGKTFSCGCSGTGYDKGPNSLSVCQ. Positions 621–788 constitute a Laminin G-like 3 domain; it reads NTATFVNEDG…GEAVFVKSGC (168 aa). Residues 789-825 enclose the EGF-like 2 domain; it reads GAACENNSCKNHAKCLDNYNVYFCDCSKTPYYGYFCH. A disordered region spans residues 1011 to 1047; it reads RATCGPEPKVPEIPTPRPVGQRADVSTPQGITTNPKL. Over residues 1034-1046 the composition is skewed to polar residues; sequence DVSTPQGITTNPK. Residues 1056-1076 form a helical membrane-spanning segment; it reads AIIVVVVLILVLLLVVLILVI. Over 1077-1124 the chain is Cytoplasmic; sequence YWYWARHKGEYHTHEDDEELKATDPYIEPAAPRKLKGEEPEKKKEWYI. The segment at 1090–1124 is disordered; that stretch reads HEDDEELKATDPYIEPAAPRKLKGEEPEKKKEWYI. Residues 1111–1124 show a composition bias toward basic and acidic residues; the sequence is LKGEEPEKKKEWYI.

In terms of tissue distribution, component of the acid-insoluble organic matrix of the aragonitic skeleton (at protein level).

Its subcellular location is the membrane. The chain is EGF and laminin G domain-containing protein from Acropora millepora (Staghorn coral).